Reading from the N-terminus, the 132-residue chain is Holo-[acyl-carrier-protein] synthase (132 aa).

Mg(2+)-binding residues include aspartate 8 and glutamate 64.

It belongs to the P-Pant transferase superfamily. AcpS family. Mg(2+) is required as a cofactor.

It is found in the cytoplasm. The enzyme catalyses apo-[ACP] + CoA = holo-[ACP] + adenosine 3',5'-bisphosphate + H(+). Transfers the 4'-phosphopantetheine moiety from coenzyme A to a Ser of acyl-carrier-protein. The chain is Holo-[acyl-carrier-protein] synthase from Shewanella sediminis (strain HAW-EB3).